A 46-amino-acid chain; its full sequence is Protein PsbN (46 aa).

The chain crosses the membrane as a helical span at residues 10–30; sequence VAIAVLAALLGLTGFGVYTAF.

It belongs to the PsbN family.

The protein localises to the cellular thylakoid membrane. Functionally, may play a role in photosystem I and II biogenesis. The chain is Protein PsbN from Synechococcus sp. (strain WH7803).